Reading from the N-terminus, the 445-residue chain is Trigger factor (445 aa).

Positions 162-247 (GDQVTIDAIG…IKAVHTAEPT (86 aa)) constitute a PPIase FKBP-type domain.

This sequence belongs to the FKBP-type PPIase family. Tig subfamily.

The protein resides in the cytoplasm. It carries out the reaction [protein]-peptidylproline (omega=180) = [protein]-peptidylproline (omega=0). In terms of biological role, involved in protein export. Acts as a chaperone by maintaining the newly synthesized protein in an open conformation. Functions as a peptidyl-prolyl cis-trans isomerase. This chain is Trigger factor, found in Rickettsia peacockii (strain Rustic).